The primary structure comprises 464 residues: tRNA-2-methylthio-N(6)-dimethylallyladenosine synthase (464 aa).

In terms of domain architecture, MTTase N-terminal spans glycine 19 to leucine 135. Positions 28, 64, 98, 170, 174, and 177 each coordinate [4Fe-4S] cluster. Positions arginine 156–lysine 393 constitute a Radical SAM core domain. In terms of domain architecture, TRAM spans glutamine 396–lysine 464.

The protein belongs to the methylthiotransferase family. MiaB subfamily. Monomer. [4Fe-4S] cluster is required as a cofactor.

It localises to the cytoplasm. The enzyme catalyses N(6)-dimethylallyladenosine(37) in tRNA + (sulfur carrier)-SH + AH2 + 2 S-adenosyl-L-methionine = 2-methylsulfanyl-N(6)-dimethylallyladenosine(37) in tRNA + (sulfur carrier)-H + 5'-deoxyadenosine + L-methionine + A + S-adenosyl-L-homocysteine + 2 H(+). Functionally, catalyzes the methylthiolation of N6-(dimethylallyl)adenosine (i(6)A), leading to the formation of 2-methylthio-N6-(dimethylallyl)adenosine (ms(2)i(6)A) at position 37 in tRNAs that read codons beginning with uridine. This Prochlorococcus marinus subsp. pastoris (strain CCMP1986 / NIES-2087 / MED4) protein is tRNA-2-methylthio-N(6)-dimethylallyladenosine synthase.